The following is a 242-amino-acid chain: Small ribosomal subunit protein uS2 (242 aa).

Belongs to the universal ribosomal protein uS2 family.

The polypeptide is Small ribosomal subunit protein uS2 (Aliivibrio fischeri (strain ATCC 700601 / ES114) (Vibrio fischeri)).